The sequence spans 353 residues: Fasciclin-like arabinogalactan protein 21 (353 aa).

A signal peptide spans 1–28; sequence MGCCSSDCFVYFILSIALAFMAISTTLR. N-linked (GlcNAc...) asparagine glycosylation is found at Asn51, Asn81, Asn94, Asn200, Asn249, and Asn315. The FAS1 1 domain occupies 83 to 181; it reads TLFAIEDASF…HGVIGPFSPL (99 aa). The FAS1 2 domain occupies 254 to 352; it reads TILATPNLVS…GISHTLEIPH (99 aa).

It belongs to the fasciclin-like AGP family.

The protein localises to the secreted. In terms of biological role, may be a cell surface adhesion protein. The chain is Fasciclin-like arabinogalactan protein 21 (FLA21) from Arabidopsis thaliana (Mouse-ear cress).